A 280-amino-acid polypeptide reads, in one-letter code: Tryptophan synthase alpha chain (280 aa).

Active-site proton acceptor residues include Glu-50 and Asp-61.

This sequence belongs to the TrpA family. In terms of assembly, tetramer of two alpha and two beta chains.

It catalyses the reaction (1S,2R)-1-C-(indol-3-yl)glycerol 3-phosphate + L-serine = D-glyceraldehyde 3-phosphate + L-tryptophan + H2O. The protein operates within amino-acid biosynthesis; L-tryptophan biosynthesis; L-tryptophan from chorismate: step 5/5. The alpha subunit is responsible for the aldol cleavage of indoleglycerol phosphate to indole and glyceraldehyde 3-phosphate. The sequence is that of Tryptophan synthase alpha chain from Methylorubrum extorquens (strain PA1) (Methylobacterium extorquens).